Consider the following 100-residue polypeptide: Toxin ParE3 (100 aa).

Belongs to the RelE toxin family.

Functionally, toxic component of a type II toxin-antitoxin (TA) system. Its toxic effect is neutralized by coexpression with cognate antitoxin ParD3 but no other ParD or RelB antitoxin. The sequence is that of Toxin ParE3 (parE3) from Caulobacter vibrioides (strain ATCC 19089 / CIP 103742 / CB 15) (Caulobacter crescentus).